Here is a 128-residue protein sequence, read N- to C-terminus: Type-4 ice-structuring protein LS-12 (128 aa).

The N-terminal stretch at 1 to 20 (MKFSLVATIVLLALAQGSFA) is a signal peptide. A Pyrrolidone carboxylic acid modification is found at Gln21.

Belongs to the apolipoprotein A1/A4/E family.

Its subcellular location is the secreted. Functionally, antifreeze proteins lower the blood freezing point. This chain is Type-4 ice-structuring protein LS-12, found in Myoxocephalus octodecemspinosus (Longhorn sculpin).